The primary structure comprises 590 residues: UvrABC system protein C (590 aa).

The GIY-YIG domain occupies 14–91; that stretch reads DQPGCYLMKD…IKKYDPKYNV (78 aa). The region spanning 196 to 231 is the UVR domain; sequence NEVKKELEAKMLEASENLQFERAKEFRDQIAHIEST.

Belongs to the UvrC family. Interacts with UvrB in an incision complex.

The protein localises to the cytoplasm. In terms of biological role, the UvrABC repair system catalyzes the recognition and processing of DNA lesions. UvrC both incises the 5' and 3' sides of the lesion. The N-terminal half is responsible for the 3' incision and the C-terminal half is responsible for the 5' incision. This is UvrABC system protein C from Bacillus licheniformis (strain ATCC 14580 / DSM 13 / JCM 2505 / CCUG 7422 / NBRC 12200 / NCIMB 9375 / NCTC 10341 / NRRL NRS-1264 / Gibson 46).